A 312-amino-acid polypeptide reads, in one-letter code: Pectinesterase inhibitor 10 (312 aa).

A signal peptide spans Met1–Ser25. 2 stretches are compositionally biased toward low complexity: residues Ser24–Leu36 and Ser44–Pro55. Positions Ser24–Asn141 are disordered. The span at Ser56 to Ser75 shows a compositional bias: pro residues. Composition is skewed to low complexity over residues Ser76–Leu85 and Ser93–Pro104. Pro residues predominate over residues Ser105 to Ser124. The span at Ser125–Ser137 shows a compositional bias: low complexity. N-linked (GlcNAc...) asparagine glycans are attached at residues Asn141, Asn153, Asn185, and Asn200. A disulfide bridge links Cys152 with Cys161. A disulfide bridge connects residues Cys218 and Cys268.

This sequence belongs to the PMEI family.

It is found in the secreted. The protein resides in the extracellular space. It localises to the apoplast. Its function is as follows. Pectin methylesterase (PME) inhibitor involved in the maintenance of cell wall integrity in response to necrotrophic pathogens. Modulates PME activity and pectin methylesterification during infection by Botrytis cinerea and contributes to resistance against the pathogen. The protein is Pectinesterase inhibitor 10 of Arabidopsis thaliana (Mouse-ear cress).